The sequence spans 228 residues: MKKQGVLIAPSIMGADLACLGDAARNIEESGANLIHIDVMDGHFVPNITFGPGIIAAINRSTDLFLEVHAMIYTPFEFVEAFVKAGADRIIVHFEAAENLKEILDYIRKCGVQAGIAFSPETSIEFISAFIPLCDVILLMSVQPGFCGQKFIPDTIEKIRFVRQAIQTLGKEGSCLIEVDGGIDEESARACREAGADILVAASYFFKKDSINMKEKVLLLQGEEHGAK.

Ser-11 contributes to the substrate binding site. A divalent metal cation contacts are provided by His-36, Asp-38, and His-69. The active-site Proton acceptor is the Asp-38. Residues His-69, 145 to 148 (GFCG), 180 to 182 (DGG), and 202 to 203 (AS) each bind substrate. Asp-180 provides a ligand contact to a divalent metal cation. The Proton donor role is filled by Asp-180.

The protein belongs to the ribulose-phosphate 3-epimerase family. It depends on a divalent metal cation as a cofactor.

The catalysed reaction is D-ribulose 5-phosphate = D-xylulose 5-phosphate. The protein operates within carbohydrate degradation. Catalyzes the reversible epimerization of D-ribulose 5-phosphate to D-xylulose 5-phosphate. In Chlamydia muridarum (strain MoPn / Nigg), this protein is Ribulose-phosphate 3-epimerase.